The chain runs to 86 residues: Envelope glycoprotein N (86 aa).

The first 29 residues, 1 to 29, serve as a signal peptide directing secretion; it reads MTLYKIVSKPIILLAFFFTRVVFTNEVDG. The Virion surface segment spans residues 30-47; it reads EELFYKPTCHSDTYEIIL. Residues 48–68 traverse the membrane as a helical segment; it reads KKFSSIWILVNTFILLCSFSL. Topologically, residues 69–86 are intravirion; that stretch reads FLKYWCFKTLAKETVKGY.

The protein belongs to the herpesviridae glycoprotein N family. Interacts (via N-terminus) with gM (via N-terminus). The gM-gN heterodimer forms the gCII complex.

The protein localises to the virion membrane. Its subcellular location is the host membrane. It localises to the host Golgi apparatus. It is found in the host trans-Golgi network. Envelope glycoprotein necessary for proper maturation of gM and modulation of its membrane fusion activity. Also plays a critical role in virion morphogenesis. The chain is Envelope glycoprotein N from Homo sapiens (Human).